The chain runs to 506 residues: Histidine ammonia-lyase (506 aa).

Positions 143–145 (ASG) form a cross-link, 5-imidazolinone (Ala-Gly). Ser144 bears the 2,3-didehydroalanine (Ser) mark.

The protein belongs to the PAL/histidase family. In terms of processing, contains an active site 4-methylidene-imidazol-5-one (MIO), which is formed autocatalytically by cyclization and dehydration of residues Ala-Ser-Gly.

The protein resides in the cytoplasm. It catalyses the reaction L-histidine = trans-urocanate + NH4(+). The protein operates within amino-acid degradation; L-histidine degradation into L-glutamate; N-formimidoyl-L-glutamate from L-histidine: step 1/3. The polypeptide is Histidine ammonia-lyase (Salmonella dublin (strain CT_02021853)).